A 98-amino-acid polypeptide reads, in one-letter code: Citrate lyase acyl carrier protein (98 aa).

Serine 14 bears the O-(phosphoribosyl dephospho-coenzyme A)serine mark.

It belongs to the CitD family. Oligomer with a subunit composition of (alpha,beta,gamma)6.

It localises to the cytoplasm. Covalent carrier of the coenzyme of citrate lyase. The chain is Citrate lyase acyl carrier protein from Vibrio cholerae serotype O1 (strain ATCC 39315 / El Tor Inaba N16961).